The chain runs to 1005 residues: Regulator of telomere elongation helicase 1 homolog (1005 aa).

A Helicase ATP-binding domain is found at 7 to 322; sequence AGIPVHFPFE…KEMLLELEKA (316 aa). Residue 42 to 49 participates in ATP binding; sequence SPTGTGKT. Residues Cys-145, Cys-163, Cys-172, and Cys-208 each contribute to the [4Fe-4S] cluster site. A DEAH box motif is present at residues 251–254; the sequence is DEAH. The residue at position 876 (Thr-876) is a Phosphothreonine. The interval 893–917 is disordered; it reads NGPLKTEPSEPATTSSSFCPTPAQS.

Belongs to the helicase family. RAD3/XPD subfamily.

It is found in the nucleus. The catalysed reaction is ATP + H2O = ADP + phosphate + H(+). Its function is as follows. A probable ATP-dependent DNA helicase implicated in DNA repair and the maintenance of genomic stability. Acts as an anti-recombinase to counteract toxic recombination and limit crossover during meiosis. Regulates meiotic recombination and crossover homeostasis by physically dissociating strand invasion events and thereby promotes noncrossover repair by meiotic synthesis dependent strand annealing (SDSA) as well as disassembly of D loop recombination intermediates. This chain is Regulator of telomere elongation helicase 1 homolog, found in Drosophila virilis (Fruit fly).